The sequence spans 1179 residues: Probable manganese-transporting ATPase PDR2 (1179 aa).

Residues 1–20 (MSSFRVGGKVVEKVDLCRKK) lie on the Cytoplasmic side of the membrane. Residues 21–42 (QLVWRLDVWPFAILYTVWLTTI) form a helical membrane-spanning segment. The Lumenal segment spans residues 43–50 (VPSIDFSD). The chain crosses the membrane as a helical span at residues 51 to 71 (ACIALGGLSAFHILVLLFTTW). Residues 72–192 (SVDFKCFVQF…FDYPQPTFQK (121 aa)) are Cytoplasmic-facing. A helical membrane pass occupies residues 193-215 (LMKENCMEPFFVFQVFCVGLWCL). Residues 216-218 (DEF) are Lumenal-facing. A helical membrane pass occupies residues 219 to 238 (WYYSVFTLFMLFMFESTMAK). At 239-402 (SRLKTLTDLR…ERVTANSWES (164 aa)) the chain is on the cytoplasmic side. Residues 403-422 (GLFILFLVVFAVIAAGYVLV) traverse the membrane as a helical segment. Over 423–435 (KGLEDPTRSKYKL) the chain is Lumenal. A helical membrane pass occupies residues 436 to 453 (LLGCSLIITSVIPPELPM). The Cytoplasmic portion of the chain corresponds to 454–947 (ELSIAVNTSL…RQGRSTLVTT (494 aa)). Asp-491 (4-aspartylphosphate intermediate) is an active-site residue. Residues Asp-812 and Asp-816 each coordinate Mg(2+). Residues 833-880 (KLPLSPSDSSKDDKSKSKKSKLPLEPASKTITQNGEGSSKGKIPPQNR) are disordered. The chain crosses the membrane as a helical span at residues 948–967 (LQMFKILGLNCLATAYVLSV). Residues 968 to 979 (MYLDGVKLGDVQ) lie on the Lumenal side of the membrane. The chain crosses the membrane as a helical span at residues 980 to 997 (ATISGVLTAAFFLFISHA). At 998-1013 (RPLQTLSAERPHPSVF) the chain is on the cytoplasmic side. The chain crosses the membrane as a helical span at residues 1014-1034 (SVYLFLSLIGQFAVHLTFLVY). Residues 1035–1059 (SVKEAEKHMPEECIEPDASFHPNLV) lie on the Lumenal side of the membrane. The chain crosses the membrane as a helical span at residues 1060–1079 (NTVSYMVSMMLQVATFAVNY). The Cytoplasmic segment spans residues 1080–1092 (MGHPFNQSIRENK). A helical transmembrane segment spans residues 1093–1110 (PFFYALIAGAGFFTVIAS). The Lumenal portion of the chain corresponds to 1111 to 1128 (DLFRDLNDSLKLVPLPQG). A helical transmembrane segment spans residues 1129–1148 (LRDKLLIWASLMFIICYSWE). Residues 1149–1179 (RLLRWAFPGKISSWKHKQRAVTANLEKKKKV) are Cytoplasmic-facing.

The protein belongs to the cation transport ATPase (P-type) (TC 3.A.3) family. Type V subfamily. As to expression, highly expressed in root meristem. Expressed in pavement cells of trichomes, stipules, stamens and pollen grains.

It is found in the endoplasmic reticulum membrane. It catalyses the reaction ATP + H2O = ADP + phosphate + H(+). Functionally, mediates manganese transport into the endoplasmic reticulum. The ATPase activity is required for cellular manganese homeostasis. Plays an important role in pollen and root development through its impact on protein secretion and transport processes. Functions together with LPR1 and LPR2 in a common pathway that adjusts root meristem activity to phosphate availability. Under phosphate limitation, restricts SHR movement in root meristem and is required for maintaining SCR expression in the root meristem stem-cell niche as well as for proximal meristem activity. Can complement the yeast spf1 mutant. The protein is Probable manganese-transporting ATPase PDR2 (PDR2) of Arabidopsis thaliana (Mouse-ear cress).